A 252-amino-acid polypeptide reads, in one-letter code: Chitooligosaccharide deacetylase (252 aa).

His61 and His125 together coordinate Mg(2+).

This sequence belongs to the YdjC deacetylase family. ChbG subfamily. As to quaternary structure, homodimer. It depends on Mg(2+) as a cofactor.

Its subcellular location is the cytoplasm. It carries out the reaction N,N'-diacetylchitobiose + H2O = N-acetyl-beta-D-glucosaminyl-(1-&gt;4)-D-glucosamine + acetate. The enzyme catalyses diacetylchitobiose-6'-phosphate + H2O = N'-monoacetylchitobiose-6'-phosphate + acetate. The protein operates within glycan degradation; chitin degradation. In terms of biological role, involved in the degradation of chitin. ChbG is essential for growth on the acetylated chitooligosaccharides chitobiose and chitotriose but is dispensable for growth on cellobiose and chitosan dimer, the deacetylated form of chitobiose. Deacetylation of chitobiose-6-P and chitotriose-6-P is necessary for both the activation of the chb promoter by the regulatory protein ChbR and the hydrolysis of phosphorylated beta-glucosides by the phospho-beta-glucosidase ChbF. Catalyzes the removal of only one acetyl group from chitobiose-6-P to yield monoacetylchitobiose-6-P, the inducer of ChbR and the substrate of ChbF. This Escherichia fergusonii (strain ATCC 35469 / DSM 13698 / CCUG 18766 / IAM 14443 / JCM 21226 / LMG 7866 / NBRC 102419 / NCTC 12128 / CDC 0568-73) protein is Chitooligosaccharide deacetylase.